The chain runs to 260 residues: 3beta-hydroxysteroid dehydrogenase 2 (260 aa).

Residues D43, 69–70 (DV), N96, Y163, and K167 contribute to the NAD(+) site. Y163 acts as the Proton acceptor in catalysis.

This sequence belongs to the short-chain dehydrogenases/reductases (SDR) family.

The catalysed reaction is 3-oxo-5beta-cholan-24-oate + NADH + H(+) = isolithocholate + NAD(+). It catalyses the reaction 12alpha-hydroxy-3-oxo-5beta-cholan-24-oate + NADH + H(+) = isodeoxycholate + NAD(+). It carries out the reaction 12alpha-hydroxy-3-oxo-5beta-cholan-24-oate + NADPH + H(+) = isodeoxycholate + NADP(+). The enzyme catalyses 7alpha,12alpha-dihydroxy-3-oxo-5beta-cholan-24-oate + NADH + H(+) = isocholate + NAD(+). The catalysed reaction is 3-oxochenodeoxycholate + NADH + H(+) = isochenodeoxycholate + NAD(+). Involved in the modification of secondary bile acids into iso-bile acids (3beta-bile acids) via epimerization of the 3-OH group through a 3-oxo-intermediate. Catalyzes the reduction of 12-alpha-hydroxy-3-oxo-5-beta-cholan-24-oate (3-oxo-DCA) and 3-oxo-5-beta-cholan-24-oate (3-oxo-LCA) to yield isodeoxycholate (isoDCA) and isolithocholate (isoLCA), respectively. Is also able to catalyze the reduction of 3-dehydrocholate (3-oxo-CA or 7alpha,12alpha-dihydroxy-3-oxo-5beta-cholan-24-oate) and 7-alpha-hydroxy-3-oxo-5-beta-cholan-24-oate (3-oxo-CDCA), into isocholate (isoCA) and isochenodeoxycholate (isoCDCA), respectively. Accepts both NADH and NADPH as cosubstrates. The conversion of the abundant bile acid deoxycholate (DCA) into isoDCA by the gut bacterium E.lenta favors the growth of the keystone commensal genus Bacteroides, since isoDCA is less cytotoxic than its parent compound, DCA; iso-bile acids have thus a potential role in modulating gut community composition. This chain is 3beta-hydroxysteroid dehydrogenase 2, found in Eggerthella lenta (strain ATCC 25559 / DSM 2243 / CCUG 17323 / JCM 9979 / KCTC 3265 / NCTC 11813 / VPI 0255 / 1899 B) (Eubacterium lentum).